The chain runs to 122 residues: HLLQFNKMIKFETRKNAVPFYAFYGCYCGWGGQGRPKDATDRCCFVHDCCYGKLAKCNTKWDIYRYSLKSGYITCGKGTWCEEQICECDRVAAECLRRSLSTYKNGYMFYPDSRCRGPSETC.

Disulfide bonds link C26–C115, C28–C44, C43–C95, C49–C122, C50–C88, C57–C81, and C75–C86. 3 residues coordinate Ca(2+): Y27, G29, and G31. H47 is a catalytic residue. D48 is a binding site for Ca(2+). D89 is an active-site residue.

This sequence belongs to the phospholipase A2 family. Group II subfamily. D49 sub-subfamily. In terms of assembly, heterodimer of one of the acidic (CA1, CA2, CA3 or CA4) and one of the basic (CBa1, CBa2, CBb, CBc or CBd) subunits; non-covalently linked. The acidic subunit is non-toxic, without enzymatic activity and comprises 3 peptides that are cross-linked by 5 disulfide bridges. The basic subunit is toxic, has phospholipase A2 activity and is composed of a single chain. Multiple variants of each subunit give different crotoxin complexes that can be subdivided into 2 classes: (1) those of high toxicity, low PLA2 activity (CBb, CBc and CBd linked with high affinity to any CA) and high stability (K(d)=4.5 nM) and (2) those of moderate toxicity, high PLA2 activity (CBa2 linked with low affinity to any CA) and low stability (K(d)=25 nM). It depends on Ca(2+) as a cofactor. In terms of tissue distribution, expressed by the venom gland.

It is found in the secreted. The enzyme catalyses a 1,2-diacyl-sn-glycero-3-phosphocholine + H2O = a 1-acyl-sn-glycero-3-phosphocholine + a fatty acid + H(+). Heterodimer CA-CB: Crotoxin is a potent presynaptic neurotoxin that possesses phospholipase A2 (PLA2) activity and exerts a lethal action by blocking neuromuscular transmission. It consists of a non-covalent association of a basic and weakly toxic PLA2 subunit (CBa2, CBb, CBc, or CBd), with a small acidic, non-enzymatic and non-toxic subunit (CA1, CA2, CA3 or CA4). The complex acts by binding to a specific 48-kDa protein (R48) receptor located on presynaptic membranes, forming a transient ternary complex CA-CB-R48, followed by dissociation of the CA-CB complex and release of the CA subunit. At equilibrium, only the CB subunits remain associated with the specific crotoxin receptor. In addition to neurotoxicity, crotoxin has been found to exert myotoxicity, nephrotoxicity, and cardiovascular toxicity. Moreover, anti-inflammatory, immunomodulatory, anti-tumor and analgesic effects of crotoxin have also been reported. Its function is as follows. Monomer CBb: The basic subunit of crotoxin is a snake venom phospholipase A2 (PLA2) that exhibits weak neurotoxicity (10-fold less than the heterodimer) and strong anticoagulant effects by binding to factor Xa (F10) and inhibiting the prothrombinase activity. In addition, it shows the same effects described for the heterodimer and binds the nucleotide-binding domain (NBD1) of CFTR chloride channels and increases the channel current. PLA2 catalyzes the calcium-dependent hydrolysis of the 2-acyl groups in 3-sn-phosphoglycerides. The protein is Phospholipase A2 crotoxin basic subunit CBb of Crotalus durissus terrificus (South American rattlesnake).